The chain runs to 436 residues: MNALVRRCVARTGIPSIWRRKCFSSGNEPAESNHVTPMLRHLMYKIKSTGPITVAEYMKEVLTNPAKGYYVHHDMLGEKGDFITSPEISQIFGELLGVWFVSEWMASGKSTAFQLVELGPGRGTLTADILRVFSQLGSVLKTCDISIHLVEVSQKLSEIQALTLTEETVPLERDAESLVYMKGVTKSGIPISWYRDLKDVPTGYSFYLAHEFFDVLPVHKFQKTPHGWREVFVDIDPQSPDKLRFVLAPCATPAEAFIQRDERREHVEVCPDAGVVIQELSQRIASTGGAALIADYGHDGTKTDTLRGFYEHQLHDVLTAPGTADLTADVDFSYLRRMAQGRVASLGPVEQRTFLKNMGIDVRLKVLLDKAGDPSLQQQLLRGYDMLMNPQKMGERFHFFALLPHQRLHVGSQGGKACQSEAPSTSVPGFDELVWH.

The transit peptide at 1 to 41 (MNALVRRCVARTGIPSIWRRKCFSSGNEPAESNHVTPMLRH) directs the protein to the mitochondrion. Residues 413–436 (QGGKACQSEAPSTSVPGFDELVWH) form a disordered region.

Belongs to the NDUFAF7 family. As to quaternary structure, interacts with NDUFS2.

The protein resides in the mitochondrion. The enzyme catalyses L-arginyl-[protein] + 2 S-adenosyl-L-methionine = N(omega),N(omega)'-dimethyl-L-arginyl-[protein] + 2 S-adenosyl-L-homocysteine + 2 H(+). Functionally, arginine methyltransferase involved in the assembly or stability of mitochondrial NADH:ubiquinone oxidoreductase complex (complex I). Acts by mediating symmetric dimethylation of 'Arg-118' of NDUFS2 after it assembles into the complex I, stabilizing the early intermediate complex. In Rattus norvegicus (Rat), this protein is Protein arginine methyltransferase NDUFAF7, mitochondrial.